The following is a 284-amino-acid chain: Pantothenate synthetase (284 aa).

30–37 (MGALHNGH) is a binding site for ATP. The Proton donor role is filled by H37. Q61 is a (R)-pantoate binding site. A beta-alanine-binding site is contributed by Q61. Residue 147 to 150 (GEKD) participates in ATP binding. A (R)-pantoate-binding site is contributed by Q153. Residues L176 and 184-187 (SSSR) contribute to the ATP site.

This sequence belongs to the pantothenate synthetase family. As to quaternary structure, homodimer.

It is found in the cytoplasm. The catalysed reaction is (R)-pantoate + beta-alanine + ATP = (R)-pantothenate + AMP + diphosphate + H(+). The protein operates within cofactor biosynthesis; (R)-pantothenate biosynthesis; (R)-pantothenate from (R)-pantoate and beta-alanine: step 1/1. Functionally, catalyzes the condensation of pantoate with beta-alanine in an ATP-dependent reaction via a pantoyl-adenylate intermediate. This chain is Pantothenate synthetase, found in Bartonella henselae (strain ATCC 49882 / DSM 28221 / CCUG 30454 / Houston 1) (Rochalimaea henselae).